A 398-amino-acid chain; its full sequence is Chalcone synthase 1 (398 aa).

Cys-167 is an active-site residue.

Belongs to the thiolase-like superfamily. Chalcone/stilbene synthases family.

It catalyses the reaction (E)-4-coumaroyl-CoA + 3 malonyl-CoA + 3 H(+) = 2',4,4',6'-tetrahydroxychalcone + 3 CO2 + 4 CoA. It participates in secondary metabolite biosynthesis; flavonoid biosynthesis. In terms of biological role, the primary product of this enzyme is 4,2',4',6'-tetrahydroxychalcone (also termed naringenin-chalcone or chalcone) which can under specific conditions spontaneously isomerize into naringenin. This Gerbera hybrida (Daisy) protein is Chalcone synthase 1 (CHS1).